We begin with the raw amino-acid sequence, 297 residues long: 4-hydroxy-tetrahydrodipicolinate synthase (297 aa).

T49 provides a ligand contact to pyruvate. The active-site Proton donor/acceptor is the Y137. Catalysis depends on K166, which acts as the Schiff-base intermediate with substrate. I208 provides a ligand contact to pyruvate.

This sequence belongs to the DapA family. As to quaternary structure, homotetramer; dimer of dimers.

The protein resides in the cytoplasm. It catalyses the reaction L-aspartate 4-semialdehyde + pyruvate = (2S,4S)-4-hydroxy-2,3,4,5-tetrahydrodipicolinate + H2O + H(+). The protein operates within amino-acid biosynthesis; L-lysine biosynthesis via DAP pathway; (S)-tetrahydrodipicolinate from L-aspartate: step 3/4. In terms of biological role, catalyzes the condensation of (S)-aspartate-beta-semialdehyde [(S)-ASA] and pyruvate to 4-hydroxy-tetrahydrodipicolinate (HTPA). The sequence is that of 4-hydroxy-tetrahydrodipicolinate synthase from Prosthecochloris aestuarii (strain DSM 271 / SK 413).